The chain runs to 374 residues: Peptide chain release factor 2 (374 aa).

The residue at position 248 (Gln-248) is an N5-methylglutamine.

This sequence belongs to the prokaryotic/mitochondrial release factor family. In terms of processing, methylated by PrmC. Methylation increases the termination efficiency of RF2.

It localises to the cytoplasm. Its function is as follows. Peptide chain release factor 2 directs the termination of translation in response to the peptide chain termination codons UGA and UAA. The protein is Peptide chain release factor 2 of Thermomicrobium roseum (strain ATCC 27502 / DSM 5159 / P-2).